We begin with the raw amino-acid sequence, 462 residues long: A-type ATP synthase subunit B (462 aa).

It belongs to the ATPase alpha/beta chains family. In terms of assembly, has multiple subunits with at least A(3), B(3), C, D, E, F, H, I and proteolipid K(x).

The protein resides in the cell membrane. Functionally, component of the A-type ATP synthase that produces ATP from ADP in the presence of a proton gradient across the membrane. The B chain is a regulatory subunit. The polypeptide is A-type ATP synthase subunit B (Methanococcus maripaludis (strain DSM 14266 / JCM 13030 / NBRC 101832 / S2 / LL)).